The sequence spans 324 residues: Glyoxylate/hydroxypyruvate reductase B (324 aa).

Active-site residues include R237 and E266. Catalysis depends on H285, which acts as the Proton donor.

The protein belongs to the D-isomer specific 2-hydroxyacid dehydrogenase family. GhrB subfamily. Homodimer.

The protein resides in the cytoplasm. The enzyme catalyses glycolate + NADP(+) = glyoxylate + NADPH + H(+). The catalysed reaction is (R)-glycerate + NAD(+) = 3-hydroxypyruvate + NADH + H(+). It carries out the reaction (R)-glycerate + NADP(+) = 3-hydroxypyruvate + NADPH + H(+). In terms of biological role, catalyzes the NADPH-dependent reduction of glyoxylate and hydroxypyruvate into glycolate and glycerate, respectively. The chain is Glyoxylate/hydroxypyruvate reductase B from Salmonella agona (strain SL483).